The chain runs to 678 residues: MTNVPETIRKRVDSLRATLEDHNYYYYVQDDPRIPDAEYDRLFRELQKLEAEHPELATEDSPTRRVGSSAETSFEEVIHRLPMLSLDNAFSEDELRDFDRRVRDRLGADGAIEYVCEPKLDGLAVSLHYENGTLTRAATRGDGYTGEDITANIRTIPSVPLKLRGSGYPDLVEVRGEVYMPRAGFEKLNERLAEQGEKTFVNPRNAAAGSLRQKKSTVTARRPLELCAYSMAVTDESVLPETHWDSLQLVRDWGFRINPEMRKAEGVEACLDAYNELMAKRDSLPYEIDGIVFKVNRLDLQQELGFVSRAPRWAIAHKFPAQEELTIIEDVEFQVGRTGAVTPVARLKPVFVGGVTVSNATLHNMDEIRRLDVHIGDTVFIRRAGDVIPQVVKVVPEKRPAEAPMVEMPEHCPVCGSDIVQIEGEAVARCSGGLYCPAQRKEAIRHYASRKAMDIEGLGDRLIEVLVDEGMVSTVADLYRLTKFQIASLERMGDKSAANLIAAIDRSREPVLWRFLYALGIREVGEATAKGLAAHFGTLEAISAADEETLQTVPDVGPIVAGHIRSFFDQPHNQETLAALKEAGVTWQEEQVLSADEQPLNGQTWVLTGTLSGMTRDQAKEKLEQLGAKVAGSVSKKTACVVAGEAAGSKLAKAEQLGVPVLDEEGLANLLREHGIEV.

NAD(+) is bound by residues 36–40 (DAEYD), 85–86 (SL), and E117. K119 acts as the N6-AMP-lysine intermediate in catalysis. R140, E177, K294, and K318 together coordinate NAD(+). Zn(2+) is bound by residues C412, C415, C430, and C436. One can recognise a BRCT domain in the interval 595–678 (ADEQPLNGQT…NLLREHGIEV (84 aa)).

The protein belongs to the NAD-dependent DNA ligase family. LigA subfamily. Mg(2+) is required as a cofactor. Requires Mn(2+) as cofactor.

It catalyses the reaction NAD(+) + (deoxyribonucleotide)n-3'-hydroxyl + 5'-phospho-(deoxyribonucleotide)m = (deoxyribonucleotide)n+m + AMP + beta-nicotinamide D-nucleotide.. Its function is as follows. DNA ligase that catalyzes the formation of phosphodiester linkages between 5'-phosphoryl and 3'-hydroxyl groups in double-stranded DNA using NAD as a coenzyme and as the energy source for the reaction. It is essential for DNA replication and repair of damaged DNA. The polypeptide is DNA ligase (Marinobacter nauticus (strain ATCC 700491 / DSM 11845 / VT8) (Marinobacter aquaeolei)).